A 161-amino-acid polypeptide reads, in one-letter code: Transcriptional repressor NrdR (161 aa).

The segment covering 1–11 (MRCPSCNSLDT) has biased composition (polar residues). The disordered stretch occupies residues 1–20 (MRCPSCNSLDTQVKDSRPTE). A zinc finger lies at 3 to 34 (CPSCNSLDTQVKDSRPTEDSSVIRRRRVCVTC). One can recognise an ATP-cone domain in the interval 49–139 (LTVIKRNGRR…VYRNFREAKD (91 aa)).

Belongs to the NrdR family. Requires Zn(2+) as cofactor.

Functionally, negatively regulates transcription of bacterial ribonucleotide reductase nrd genes and operons by binding to NrdR-boxes. This Bradyrhizobium sp. (strain ORS 278) protein is Transcriptional repressor NrdR.